The primary structure comprises 281 residues: Probable endonuclease 4 (281 aa).

The Zn(2+) site is built by His-69, His-109, Glu-145, Asp-179, His-182, His-216, Asp-229, His-231, and Glu-261.

It belongs to the AP endonuclease 2 family. It depends on Zn(2+) as a cofactor.

The catalysed reaction is Endonucleolytic cleavage to 5'-phosphooligonucleotide end-products.. Its function is as follows. Endonuclease IV plays a role in DNA repair. It cleaves phosphodiester bonds at apurinic or apyrimidinic (AP) sites, generating a 3'-hydroxyl group and a 5'-terminal sugar phosphate. This chain is Probable endonuclease 4, found in Nautilia profundicola (strain ATCC BAA-1463 / DSM 18972 / AmH).